The following is a 153-amino-acid chain: Putative nuclear shuttle protein (153 aa).

The protein belongs to the nanoviridae nuclear shuttle protein family.

The protein localises to the host nucleus. It is found in the host cytoplasm. In terms of biological role, putative nuclear shuttle protein. This is Putative nuclear shuttle protein (DNA-N) from Cicer arietinum (Chickpea).